We begin with the raw amino-acid sequence, 698 residues long: Elongation factor G (698 aa).

Positions 6 to 281 (ENIRNIGICA…AVVDYLPSPI (276 aa)) constitute a tr-type G domain. Residues 15 to 22 (AHIDAGKT), 79 to 83 (DTPGH), and 133 to 136 (NKMD) contribute to the GTP site.

The protein belongs to the TRAFAC class translation factor GTPase superfamily. Classic translation factor GTPase family. EF-G/EF-2 subfamily.

It is found in the cytoplasm. In terms of biological role, catalyzes the GTP-dependent ribosomal translocation step during translation elongation. During this step, the ribosome changes from the pre-translocational (PRE) to the post-translocational (POST) state as the newly formed A-site-bound peptidyl-tRNA and P-site-bound deacylated tRNA move to the P and E sites, respectively. Catalyzes the coordinated movement of the two tRNA molecules, the mRNA and conformational changes in the ribosome. This Rickettsia bellii (strain RML369-C) protein is Elongation factor G.